The sequence spans 376 residues: UPF0754 membrane protein SERP1382 (376 aa).

The next 2 membrane-spanning stretches (helical) occupy residues 4–24 (ILLV…TNMI) and 356–376 (TLGF…AIFV).

The protein belongs to the UPF0754 family.

Its subcellular location is the cell membrane. The polypeptide is UPF0754 membrane protein SERP1382 (Staphylococcus epidermidis (strain ATCC 35984 / DSM 28319 / BCRC 17069 / CCUG 31568 / BM 3577 / RP62A)).